The primary structure comprises 428 residues: Citrate synthase (428 aa).

Residues histidine 265, histidine 306, and aspartate 363 contribute to the active site.

This sequence belongs to the citrate synthase family. Homohexamer.

It catalyses the reaction oxaloacetate + acetyl-CoA + H2O = citrate + CoA + H(+). It participates in carbohydrate metabolism; tricarboxylic acid cycle; isocitrate from oxaloacetate: step 1/2. Allosterically inhibited by NADH. This is Citrate synthase (gltA) from Pseudomonas aeruginosa (strain ATCC 15692 / DSM 22644 / CIP 104116 / JCM 14847 / LMG 12228 / 1C / PRS 101 / PAO1).